The following is a 209-amino-acid chain: UPF0502 protein PSHAa0076 (209 aa).

This sequence belongs to the UPF0502 family.

This is UPF0502 protein PSHAa0076 from Pseudoalteromonas translucida (strain TAC 125).